The primary structure comprises 181 residues: ADP-ribosylation factor 1 (181 aa).

Residue Gly2 is the site of N-myristoyl glycine attachment. GTP-binding positions include 24–31 (GLDAAGKT), 67–71 (DVGGQ), and 126–129 (NKQD).

It belongs to the small GTPase superfamily. Arf family.

Its subcellular location is the golgi apparatus. The catalysed reaction is GTP + H2O = GDP + phosphate + H(+). In terms of biological role, GTP-binding protein involved in protein trafficking; may modulate vesicle budding and uncoating within the Golgi apparatus. The chain is ADP-ribosylation factor 1 (ARF1) from Daucus carota (Wild carrot).